We begin with the raw amino-acid sequence, 60 residues long: MAVPKRKTTPSKRGMRRAHDALSSPVYIEDKDSGELRRPHHVDLKSGMYRGRQILEPKDD.

A compositionally biased stretch (basic residues) spans 1–16 (MAVPKRKTTPSKRGMR). Residues 1-34 (MAVPKRKTTPSKRGMRRAHDALSSPVYIEDKDSG) are disordered.

This sequence belongs to the bacterial ribosomal protein bL32 family.

The polypeptide is Large ribosomal subunit protein bL32 (Maricaulis maris (strain MCS10) (Caulobacter maris)).